We begin with the raw amino-acid sequence, 358 residues long: Methylthioribose-1-phosphate isomerase (358 aa).

Residues arginine 54–alanine 56, arginine 96, and glutamine 205 each bind substrate. Residue aspartate 246 is the Proton donor of the active site. A substrate-binding site is contributed by asparagine 256 to lysine 257.

Belongs to the eIF-2B alpha/beta/delta subunits family. MtnA subfamily.

It carries out the reaction 5-(methylsulfanyl)-alpha-D-ribose 1-phosphate = 5-(methylsulfanyl)-D-ribulose 1-phosphate. The protein operates within amino-acid biosynthesis; L-methionine biosynthesis via salvage pathway; L-methionine from S-methyl-5-thio-alpha-D-ribose 1-phosphate: step 1/6. Its function is as follows. Catalyzes the interconversion of methylthioribose-1-phosphate (MTR-1-P) into methylthioribulose-1-phosphate (MTRu-1-P). The sequence is that of Methylthioribose-1-phosphate isomerase from Stutzerimonas stutzeri (strain A1501) (Pseudomonas stutzeri).